The primary structure comprises 182 residues: Large ribosomal subunit protein uL5 (182 aa).

Belongs to the universal ribosomal protein uL5 family. As to quaternary structure, part of the 50S ribosomal subunit; part of the 5S rRNA/L5/L18/L25 subcomplex. Contacts the 5S rRNA and the P site tRNA. Forms a bridge to the 30S subunit in the 70S ribosome.

In terms of biological role, this is one of the proteins that bind and probably mediate the attachment of the 5S RNA into the large ribosomal subunit, where it forms part of the central protuberance. In the 70S ribosome it contacts protein S13 of the 30S subunit (bridge B1b), connecting the 2 subunits; this bridge is implicated in subunit movement. Contacts the P site tRNA; the 5S rRNA and some of its associated proteins might help stabilize positioning of ribosome-bound tRNAs. The polypeptide is Large ribosomal subunit protein uL5 (Trichormus variabilis (strain ATCC 29413 / PCC 7937) (Anabaena variabilis)).